Consider the following 132-residue polypeptide: MHLLTTTLISFEQNKVEYLTQIAIYTQTPVCTDSNCEHARFLKHSLIQVSIERIEYLYSIFPNIWQFALLCQGQNKESLIHMEEDASTNFKLRYYVLPWSRRLQGYQSITVQNGSHVPLVKRLEKWRIFVEC.

As to quaternary structure, interacts with bqt2 and sad1. The bqt1-bqt2-sad1 complex binds rap1.

The protein localises to the cytoplasm. It localises to the cytoskeleton. Its subcellular location is the microtubule organizing center. The protein resides in the spindle pole body. It is found in the chromosome. The protein localises to the telomere. In terms of biological role, involved in chromosome segregation. During meiotic prophase, connects telomeres to the spindle pole body by forming a bridge between the telomere protein rap1 and the spindle pole body protein sad1. The polypeptide is Telomere bouquet protein 1 (bqt1) (Schizosaccharomyces pombe (strain 972 / ATCC 24843) (Fission yeast)).